The primary structure comprises 273 residues: 5-deoxy-glucuronate isomerase (273 aa).

Belongs to the isomerase IolB family.

The catalysed reaction is 5-deoxy-D-glucuronate = 5-dehydro-2-deoxy-D-gluconate. It participates in polyol metabolism; myo-inositol degradation into acetyl-CoA; acetyl-CoA from myo-inositol: step 4/7. Involved in the isomerization of 5-deoxy-glucuronate (5DG) to 5-dehydro-2-deoxy-D-gluconate (DKG or 2-deoxy-5-keto-D-gluconate). This Listeria monocytogenes serotype 4b (strain CLIP80459) protein is 5-deoxy-glucuronate isomerase.